Reading from the N-terminus, the 343-residue chain is Calcium/calmodulin-dependent protein kinase type 1B (343 aa).

The Protein kinase domain maps to 15–270 (YEIREKLGSG…CQQALQHLWI (256 aa)). ATP contacts are provided by residues 21-29 (LGSGAFSEV) and Lys-44. Catalysis depends on Asp-136, which acts as the Proton acceptor. Positions 290-311 (KNFARTHWKRAFNATSFLRHIR) are calmodulin-binding. The disordered stretch occupies residues 314–343 (GQSPEGEEASRQCMTRHSHPGLGTSQSPKW). A Phosphoserine modification is found at Ser-338.

It belongs to the protein kinase superfamily. CAMK Ser/Thr protein kinase family. CaMK subfamily. As to expression, expressed at highest levels in adult brain, and expressed in embryo. In the adult brain detected at high levels in the anterior olfactory nuclei, piriform cortex, septal nuclei, bed nuclei of the stria terminalis, hippocampal pyramidal cells, dentate granule cells, amygdala, hypothalamic nuclei, parabrachial nucleus, and nucleus of the solitary tract. Expressed at lower levels in adult ovary and heart and at very low levels in testis, lung and muscle.

The protein localises to the cytoplasm. It is found in the nucleus. The catalysed reaction is L-seryl-[protein] + ATP = O-phospho-L-seryl-[protein] + ADP + H(+). The enzyme catalyses L-threonyl-[protein] + ATP = O-phospho-L-threonyl-[protein] + ADP + H(+). Activated by Ca(2+)/calmodulin. In terms of biological role, calcium/calmodulin-dependent protein kinase belonging to a proposed calcium-triggered signaling cascade. In vitro phosphorylates CREB1 and SYN1/synapsin I. Phosphorylates and activates CAMK1. The sequence is that of Calcium/calmodulin-dependent protein kinase type 1B (Pnck) from Mus musculus (Mouse).